Reading from the N-terminus, the 369-residue chain is Serine/threonine-protein phosphatase PP2A-1 catalytic subunit (369 aa).

Residues 1–57 form a disordered region; it reads MDTDLDVPMQDAVTEQLTPTVSEDMDLNNNSSDNNAEEFSVDDLKPGSSGIADHKSS. The Mn(2+) site is built by Asp-117, His-119, Asp-145, and Asn-177. His-178 (proton donor) is an active-site residue. Residues His-227 and His-301 each contribute to the Mn(2+) site. A disordered region spans residues 348–369; it reads QYDPSVRPGEPSVSRKTPDYFL. Residue Leu-369 is modified to Leucine methyl ester.

This sequence belongs to the PPP phosphatase family. PP-2A subfamily. In terms of assembly, inactivated in a complex with phosphatase methylesterase PPE1 (PP2Ai). Interacts with phosphatase 2A activator RRD2, which can reactivate PP2Ai by dissociating the catalytic subunit from the complex. Forms a ternary complex with RRD2-TAP42. The cofactor is Mn(2+). Post-translationally, reversibly methyl esterified on Leu-369 by leucine carboxyl methyltransferase 1 (PPM1) and protein phosphatase methylesterase 1 (PPE1). Carboxyl methylation influences the affinity of the catalytic subunit for the different regulatory subunits, thereby modulating the PP2A holoenzyme's substrate specificity, enzyme activity and cellular localization.

The enzyme catalyses O-phospho-L-seryl-[protein] + H2O = L-seryl-[protein] + phosphate. It carries out the reaction O-phospho-L-threonyl-[protein] + H2O = L-threonyl-[protein] + phosphate. In terms of biological role, exact function not known, phosphatase 2A performs an essential cellular function. This Saccharomyces cerevisiae (strain ATCC 204508 / S288c) (Baker's yeast) protein is Serine/threonine-protein phosphatase PP2A-1 catalytic subunit (PPH21).